We begin with the raw amino-acid sequence, 337 residues long: ERI1 exoribonuclease 3 (337 aa).

Positions 146–320 (FLVLDFEATC…DDCKNIANIM (175 aa)) constitute an Exonuclease domain. Residues Asp150, Glu152, and Asp249 each coordinate Mg(2+). Glu152 functions as the Proton acceptor in the catalytic mechanism. Position 152 (Glu152) interacts with AMP. Catalysis depends on His307, which acts as the Proton acceptor. His307 is an AMP binding site. Asp312 is a binding site for Mg(2+).

In terms of assembly, interacts with PRNP. Mg(2+) serves as cofactor. As to expression, highly expressed in the brain, heart, thyroid and testis. Expressed at low levels in the muscle cells, liver, pancreas and kidney.

The protein is ERI1 exoribonuclease 3 (Eri3) of Mus musculus (Mouse).